The sequence spans 372 residues: MTSIKPIHNGKKVIVGMSGGVDSSVSAYLLMQQGYEVEGLFMKNWEEDDTDEYCAAADDLKDAQAVCDKLGIKMHTVNFAAEYWDNVFEYFLAEYKAGRTPNPDIMCNKEIKFKAFLEFADDILDADYIAMGHYVRRRDNSDGSVQMLRGVDGNKDQSYFLYTLSHEQVARSLFPVGELEKHEVRDIAKQMGLITHDKKDSTGICFIGERKFTDFLATYLPAQPGDIETPEGEVIGKHQGLMYHTLGQRKGLGIGGLKDSNEDPWYVVEKDLLRNVLIVAQGGNHPRLMSQGMTVNQLHWVDRKGPATDSQLVVKTRYRQTDVPCRISFDDPQRITVIFDSPVAAVTPGQSAVFYDGDVCLGGGIIDSLIRG.

ATP is bound by residues 16 to 23 and M42; that span reads GMSGGVDS. Residues 102-104 form an interaction with target base in tRNA region; it reads NPD. C107 (nucleophile) is an active-site residue. C107 and C205 are disulfide-bonded. ATP is bound at residue G132. The tract at residues 155-157 is interaction with tRNA; the sequence is KDQ. C205 (cysteine persulfide intermediate) is an active-site residue. Residues 317–318 are interaction with tRNA; it reads RY.

The protein belongs to the MnmA/TRMU family.

The protein resides in the cytoplasm. It catalyses the reaction S-sulfanyl-L-cysteinyl-[protein] + uridine(34) in tRNA + AH2 + ATP = 2-thiouridine(34) in tRNA + L-cysteinyl-[protein] + A + AMP + diphosphate + H(+). Functionally, catalyzes the 2-thiolation of uridine at the wobble position (U34) of tRNA, leading to the formation of s(2)U34. The sequence is that of tRNA-specific 2-thiouridylase MnmA from Shewanella denitrificans (strain OS217 / ATCC BAA-1090 / DSM 15013).